The chain runs to 695 residues: Elongation factor G (695 aa).

The tr-type G domain occupies 9–283 (EKIRNIGIVA…AVIDYLPSPL (275 aa)). Residues 18–25 (AHIDAGKT), 82–86 (DTPGH), and 136–139 (NKMD) contribute to the GTP site.

The protein belongs to the TRAFAC class translation factor GTPase superfamily. Classic translation factor GTPase family. EF-G/EF-2 subfamily.

The protein resides in the cytoplasm. Functionally, catalyzes the GTP-dependent ribosomal translocation step during translation elongation. During this step, the ribosome changes from the pre-translocational (PRE) to the post-translocational (POST) state as the newly formed A-site-bound peptidyl-tRNA and P-site-bound deacylated tRNA move to the P and E sites, respectively. Catalyzes the coordinated movement of the two tRNA molecules, the mRNA and conformational changes in the ribosome. The protein is Elongation factor G of Petrotoga mobilis (strain DSM 10674 / SJ95).